The primary structure comprises 573 residues: MRLSQLLMPTLREVPADAEIPSHVLMLKAGLMRKLAAGIYVYLPLGKRVLKKVEEIVREEMDREGSQEVLMSALIPAELFKETGRWDVFGPEMFKLKDRNERDFCLGPTHEEVFTDLVRNEVKSYRQLPLILYQIQTKFRDERRPRFGVMRSREFIMKDAYSFDADWEGLDESFNKMYRAYCRIFDRCGLKYLVVEADPGAMGGRDSKEFMVISSVGEAVIAYCDSCGYAANEEKAECLIESRDEEMLEIEKVYTPNVKTIEELVDFLKISPSKFVKTLIYKAKGKVVAALVRGDRDINETKLLNVLSIREEELELADGALVEEVTGAKVGFAGPLGLKGEVTLVVDSEIPQLRNFIVGANETDYHIKNVNYGRDFKGDIVADIKSVVEGDRCPRCGAPLKIARGIEVGHIFKLGTKYSEALGATYTDEEGNEKPIVMGCYGIGINRTVAAIIEQHHDEKGIIWPMSVAPYHVIVVPVNVSDEEQKQIAEKIYNKLLEEKLEVLIDDRDVRAGVKFNDADLIGIPVRVTIGKKVKEGIVEIKLREREEVEEVKVEEVVKRVKQIVEEKLRELS.

This sequence belongs to the class-II aminoacyl-tRNA synthetase family. ProS type 1 subfamily. In terms of assembly, homodimer.

The protein localises to the cytoplasm. It catalyses the reaction tRNA(Pro) + L-proline + ATP = L-prolyl-tRNA(Pro) + AMP + diphosphate. Functionally, catalyzes the attachment of proline to tRNA(Pro) in a two-step reaction: proline is first activated by ATP to form Pro-AMP and then transferred to the acceptor end of tRNA(Pro). As ProRS can inadvertently accommodate and process non-cognate amino acids such as alanine and cysteine, to avoid such errors it has two additional distinct editing activities against alanine. One activity is designated as 'pretransfer' editing and involves the tRNA(Pro)-independent hydrolysis of activated Ala-AMP. The other activity is designated 'posttransfer' editing and involves deacylation of mischarged Ala-tRNA(Pro). The misacylated Cys-tRNA(Pro) is not edited by ProRS. The sequence is that of Proline--tRNA ligase from Caldanaerobacter subterraneus subsp. tengcongensis (strain DSM 15242 / JCM 11007 / NBRC 100824 / MB4) (Thermoanaerobacter tengcongensis).